The following is a 518-amino-acid chain: Chromosomal replication initiator protein DnaA (518 aa).

Positions 1 to 76 (METDGGDFPS…RALSEAYGSP (76 aa)) are domain I, interacts with DnaA modulators. Residues 76–176 (PIRLAVTVDP…RRPTTRIENS (101 aa)) form a domain II region. Residues 91-174 (LTPERTGEHS…QPRRPTTRIE (84 aa)) are disordered. Basic and acidic residues predominate over residues 124 to 135 (DGLHLDERRSGS). Positions 136–147 (LEEDSPLDDSDP) are enriched in acidic residues. The segment at 177-393 (RLNPKYIFET…GALIRVTAFA (217 aa)) is domain III, AAA+ region. ATP contacts are provided by Gly221, Gly223, Lys224, and Thr225. A domain IV, binds dsDNA region spans residues 394–518 (SLNRQPVDMQ…TNRIKKQSGA (125 aa)).

The protein belongs to the DnaA family. As to quaternary structure, oligomerizes as a right-handed, spiral filament on DNA at oriC.

The protein localises to the cytoplasm. Its function is as follows. Plays an essential role in the initiation and regulation of chromosomal replication. ATP-DnaA binds to the origin of replication (oriC) to initiate formation of the DNA replication initiation complex once per cell cycle. Binds the DnaA box (a 9 base pair repeat at the origin) and separates the double-stranded (ds)DNA. Forms a right-handed helical filament on oriC DNA; dsDNA binds to the exterior of the filament while single-stranded (ss)DNA is stabiized in the filament's interior. The ATP-DnaA-oriC complex binds and stabilizes one strand of the AT-rich DNA unwinding element (DUE), permitting loading of DNA polymerase. After initiation quickly degrades to an ADP-DnaA complex that is not apt for DNA replication. Binds acidic phospholipids. The chain is Chromosomal replication initiator protein DnaA from Kineococcus radiotolerans (strain ATCC BAA-149 / DSM 14245 / SRS30216).